Consider the following 497-residue polypeptide: MKYIVALDQGTTSSRAILFDESQNIIGVAQKEFTQIYPNEGWVEHDPMEIWSSQSGVLSEVIARAGISQHDIIALGITNQRETTIVWDKNTGKPVYNAIVWQCRRTAKICDELKEIEGFSDYVKDNTGLLVDAYFSGTKIKWILDNVEGARERAEKGELLFGTVDTWLIWKLTNGKIHATDYTNASRTMLYNIKELKWDEKILETLNIPKSMLPEVKDSSGTFGYANLGGKGGHRIPIAGVAGDQQSALFGQACFEEGESKNTYGTGCFLLMNTGEKFVKSNNGLITTIAIGLNGKVQYALEGSVFVGGASVQWLRDELKLISDSKDTEYFARKVKDSAGVYVVPAFVGLGAPYWDMYARGAILGLTRGANKNHIIRATLESIAYQTKDVLKAMEEDSGIKLNGLKVDGGAAANNFLMEFQADILGESVKRPTVLETTALGAAYLAGLAVGFWENKNEIKQKWVLDKEFTPNMPKEERDKKYAGWLKAVERTKKWEE.

Residue T11 coordinates ADP. Positions 11, 12, and 13 each coordinate ATP. Residue T11 coordinates sn-glycerol 3-phosphate. ADP is bound at residue R15. Sn-glycerol 3-phosphate contacts are provided by R81, E82, Y134, and D244. Positions 81, 82, 134, 244, and 245 each coordinate glycerol. Residues T266 and G309 each coordinate ADP. ATP-binding residues include T266, G309, Q313, and G410. The ADP site is built by G410 and N414.

It belongs to the FGGY kinase family.

It carries out the reaction glycerol + ATP = sn-glycerol 3-phosphate + ADP + H(+). The protein operates within polyol metabolism; glycerol degradation via glycerol kinase pathway; sn-glycerol 3-phosphate from glycerol: step 1/1. With respect to regulation, inhibited by fructose 1,6-bisphosphate (FBP). Key enzyme in the regulation of glycerol uptake and metabolism. Catalyzes the phosphorylation of glycerol to yield sn-glycerol 3-phosphate. The protein is Glycerol kinase of Fusobacterium nucleatum subsp. nucleatum (strain ATCC 25586 / DSM 15643 / BCRC 10681 / CIP 101130 / JCM 8532 / KCTC 2640 / LMG 13131 / VPI 4355).